Reading from the N-terminus, the 129-residue chain is SOSS complex subunit C homolog (129 aa).

The tract at residues Arg-105–Lys-129 is disordered.

The protein belongs to the SOSS-C family.

The polypeptide is SOSS complex subunit C homolog (Drosophila erecta (Fruit fly)).